Reading from the N-terminus, the 950-residue chain is A disintegrin and metalloproteinase with thrombospondin motifs 15 (950 aa).

The N-terminal stretch at 1-18 (MLLLGISILALAWRPAGS) is a signal peptide. The propeptide occupies 19–212 (SEPEWEVVVP…NRRRSGRAKR (194 aa)). Asparagine 141 is a glycosylation site (N-linked (GlcNAc...) asparagine). Residues 144–172 (APEAQRHSQGAHLLQRRGAPVGPSGDPTS) form a disordered region. The Cysteine switch motif lies at 172 to 179 (SRCGVASG). Cysteine 174 provides a ligand contact to Zn(2+). Positions 218–427 (RYVETLVVAD…GHGDCLLDQP (210 aa)) constitute a Peptidase M12B domain. 11 disulfides stabilise this stretch: cysteine 293–cysteine 345, cysteine 322–cysteine 327, cysteine 339–cysteine 422, cysteine 377–cysteine 406, cysteine 448–cysteine 470, cysteine 459–cysteine 480, cysteine 465–cysteine 499, cysteine 493–cysteine 504, cysteine 528–cysteine 565, cysteine 532–cysteine 570, and cysteine 543–cysteine 555. A Zn(2+)-binding site is contributed by histidine 361. Glutamate 362 is a catalytic residue. Histidine 365 and histidine 371 together coordinate Zn(2+). One can recognise a Disintegrin domain in the interval 428-515 (SKPITLPEDL…ERHNPNKYRV (88 aa)). In terms of domain architecture, TSP type-1 1 spans 516–571 (DGSWAKWEPYGSCSRTCGGGVQLARRQCSNPTPANGGKYCEGVRVKYRSCNLEPCP). 3 N-linked (GlcNAc...) asparagine glycosylation sites follow: asparagine 591, asparagine 623, and asparagine 679. The interval 701 to 838 (AIPAGASSID…SNQVEQPDNR (138 aa)) is spacer. The tract at residues 798–822 (FYLPKEPREDKSTRPKDPRGSPVLR) is disordered. Residues 802–816 (KEPREDKSTRPKDPR) show a composition bias toward basic and acidic residues. 2 TSP type-1 domains span residues 839–895 (PPAR…EPCP) and 896–949 (TWEL…VLRP).

The cofactor is Zn(2+). Post-translationally, the precursor is cleaved by a furin endopeptidase. Glycosylated. Can be O-fucosylated by POFUT2 on a serine or a threonine residue found within the consensus sequence C1-X(2)-(S/T)-C2-G of the TSP type-1 repeat domains where C1 and C2 are the first and second cysteine residue of the repeat, respectively. Fucosylated repeats can then be further glycosylated by the addition of a beta-1,3-glucose residue by the glucosyltransferase, B3GALTL. Fucosylation mediates the efficient secretion of ADAMTS family members. Can be C-glycosylated with one or two mannose molecules on tryptophan residues within the consensus sequence W-X-X-W of the TPRs. Also N-glycosylated. These other glycosylations can also facilitate secretion. As to expression, in the adult colon, highly expressed in the muscularis externa (inner circular smooth muscle and outer longitudinal smooth muscle), muscularis mucosa, submucosal glands, crypt, villi epithelial cells, goblet cells and lamina propria. Expressed at perimuscular and peritendious areas in the developing limbs.

The protein resides in the secreted. The protein localises to the extracellular space. Its subcellular location is the extracellular matrix. It is found in the cell surface. In terms of biological role, metalloprotease which has proteolytic activity against the proteoglycan VCAN, cleaving it at the 'Glu-1401-|-1402-Ala' site. Cleaves VCAN in the pericellular matrix surrounding myoblasts, facilitating myoblast contact and fusion which is required for skeletal muscle development and regeneration. The polypeptide is A disintegrin and metalloproteinase with thrombospondin motifs 15 (Adamts15) (Mus musculus (Mouse)).